A 311-amino-acid chain; its full sequence is tRNA(Ile)-lysidine synthase (311 aa).

Residue 32–37 (SGGPDS) coordinates ATP.

It belongs to the tRNA(Ile)-lysidine synthase family.

Its subcellular location is the cytoplasm. It carries out the reaction cytidine(34) in tRNA(Ile2) + L-lysine + ATP = lysidine(34) in tRNA(Ile2) + AMP + diphosphate + H(+). Its function is as follows. Ligates lysine onto the cytidine present at position 34 of the AUA codon-specific tRNA(Ile) that contains the anticodon CAU, in an ATP-dependent manner. Cytidine is converted to lysidine, thus changing the amino acid specificity of the tRNA from methionine to isoleucine. This Cutibacterium acnes (strain DSM 16379 / KPA171202) (Propionibacterium acnes) protein is tRNA(Ile)-lysidine synthase.